Consider the following 247-residue polypeptide: Ribonuclease 3 (247 aa).

Residues 21–149 (LQKLSKKIGI…LVGAIYLDQG (129 aa)) enclose the RNase III domain. Residue E62 participates in Mg(2+) binding. D66 is an active-site residue. N135 and E138 together coordinate Mg(2+). Residue E138 is part of the active site. One can recognise a DRBM domain in the interval 176-245 (DYKTQLQEYS…AKELYNRIRK (70 aa)).

The protein belongs to the ribonuclease III family. Homodimer. Mg(2+) is required as a cofactor.

The protein localises to the cytoplasm. The catalysed reaction is Endonucleolytic cleavage to 5'-phosphomonoester.. Digests double-stranded RNA. Involved in the processing of primary rRNA transcript to yield the immediate precursors to the large and small rRNAs (23S and 16S). Processes some mRNAs, and tRNAs when they are encoded in the rRNA operon. Processes pre-crRNA and tracrRNA of type II CRISPR loci if present in the organism. This is Ribonuclease 3 from Leptospira interrogans serogroup Icterohaemorrhagiae serovar copenhageni (strain Fiocruz L1-130).